An 801-amino-acid chain; its full sequence is Leucine--tRNA ligase (801 aa).

A 'HIGH' region motif is present at residues 40–51 (PYPSGAGLHVGH). The 'KMSKS' region motif lies at 576–580 (KMSKS). Lysine 579 contacts ATP.

The protein belongs to the class-I aminoacyl-tRNA synthetase family.

Its subcellular location is the cytoplasm. The catalysed reaction is tRNA(Leu) + L-leucine + ATP = L-leucyl-tRNA(Leu) + AMP + diphosphate. The sequence is that of Leucine--tRNA ligase from Exiguobacterium sibiricum (strain DSM 17290 / CCUG 55495 / CIP 109462 / JCM 13490 / 255-15).